The chain runs to 892 residues: Protein FAM193B (892 aa).

Disordered stretches follow at residues 1–78, 164–192, 237–321, and 379–403; these read MTRR…TSSQ, SCGGDSHSSSSSSSSSSSSSSSCHGNSGD, EHHQ…PLLK, and DEGLGEEEDSSSERSSCTSSSTHPR. Residues 28-37 show a composition bias toward pro residues; that stretch reads APEPQPPPPS. Residues 56–65 are compositionally biased toward basic and acidic residues; that stretch reads DGPREEEEPK. Low complexity predominate over residues 169-185; that stretch reads SHSSSSSSSSSSSSSSS. 3 stretches are compositionally biased toward pro residues: residues 248-258, 274-285, and 309-321; these read PNSPTGPPPHP, YPPPLPTTPVAP, and SPHPPSTSMPLLK. The span at 379–388 shows a compositional bias: acidic residues; sequence DEGLGEEEDS. Residues 391 to 400 show a composition bias toward low complexity; sequence ERSSCTSSST. Residues 485 to 517 are a coiled coil; sequence NSARAAKRARHKLKKKEKEKARLATEALKQVNR. Polar residues-rich tracts occupy residues 587–597 and 610–621; these read LTPSDLSGSSQ and TLGSPQSHTLQA. Disordered regions lie at residues 587–655 and 671–837; these read LTPS…ENGL and VKTP…SLDD. Residues 637-650 show a composition bias toward pro residues; it reads PPPWTEVRGPPPGI. Over residues 736–757 the composition is skewed to low complexity; that stretch reads KSQVSSPKQPSKGSEPAKVGSG. Serine 764, serine 776, and serine 882 each carry phosphoserine.

This sequence belongs to the FAM193 family.

It localises to the cytoplasm. It is found in the nucleus. The polypeptide is Protein FAM193B (Fam193b) (Mus musculus (Mouse)).